Here is a 91-residue protein sequence, read N- to C-terminus: UPF0147 protein DKAM_0139 (91 aa).

Belongs to the UPF0147 family.

This is UPF0147 protein DKAM_0139 from Desulfurococcus amylolyticus (strain DSM 18924 / JCM 16383 / VKM B-2413 / 1221n) (Desulfurococcus kamchatkensis).